Consider the following 302-residue polypeptide: Oxaloacetate decarboxylase 2 (302 aa).

Residue serine 50 participates in substrate binding. A Mg(2+)-binding site is contributed by aspartate 88. Residues arginine 159 and histidine 235 each contribute to the substrate site.

Belongs to the isocitrate lyase/PEP mutase superfamily. Oxaloacetate decarboxylase family. As to quaternary structure, homotetramer; dimer of dimers. The cofactor is Mg(2+).

The catalysed reaction is oxaloacetate + H(+) = pyruvate + CO2. Functionally, catalyzes the decarboxylation of oxaloacetate into pyruvate. Seems to play a role in maintaining cellular concentrations of bicarbonate and pyruvate. This Pseudomonas putida (strain W619) protein is Oxaloacetate decarboxylase 2.